The sequence spans 443 residues: C4-dicarboxylate transport protein (443 aa).

Helical transmembrane passes span Ser-7–Phe-26, Met-46–Met-63, Ala-76–Leu-98, Leu-140–Ala-162, Val-183–Phe-205, Leu-218–Ile-240, and Phe-350–Leu-372. The disordered stretch occupies residues Gly-415 to Thr-443. Over residues Ser-427–Thr-443 the composition is skewed to basic and acidic residues.

Belongs to the dicarboxylate/amino acid:cation symporter (DAACS) (TC 2.A.23) family.

It is found in the cell membrane. Its function is as follows. Responsible for the transport of dicarboxylates such as succinate, fumarate, and malate across the membrane. The sequence is that of C4-dicarboxylate transport protein (dctA) from Deinococcus radiodurans (strain ATCC 13939 / DSM 20539 / JCM 16871 / CCUG 27074 / LMG 4051 / NBRC 15346 / NCIMB 9279 / VKM B-1422 / R1).